Here is a 427-residue protein sequence, read N- to C-terminus: Glutamyl-tRNA(Gln) amidotransferase subunit D (427 aa).

The 334-residue stretch at 74 to 407 (ERVYIIGAGG…EVVRKMFQRN (334 aa)) folds into the Asparaginase/glutaminase domain. Residues threonine 84, threonine 160, aspartate 161, and lysine 240 contribute to the active site.

This sequence belongs to the asparaginase 1 family. GatD subfamily. Heterodimer of GatD and GatE.

It catalyses the reaction L-glutamyl-tRNA(Gln) + L-glutamine + ATP + H2O = L-glutaminyl-tRNA(Gln) + L-glutamate + ADP + phosphate + H(+). Allows the formation of correctly charged Gln-tRNA(Gln) through the transamidation of misacylated Glu-tRNA(Gln) in organisms which lack glutaminyl-tRNA synthetase. The reaction takes place in the presence of glutamine and ATP through an activated gamma-phospho-Glu-tRNA(Gln). The GatDE system is specific for glutamate and does not act on aspartate. The sequence is that of Glutamyl-tRNA(Gln) amidotransferase subunit D from Aeropyrum pernix (strain ATCC 700893 / DSM 11879 / JCM 9820 / NBRC 100138 / K1).